The chain runs to 339 residues: MNGLEAALPSLTDNSSLAYSEQCGQETPLENMLFACFYLLDFILAFVGNALALWLFIWDHKSGTPANVFLMHLAVADLSCVLVLPTRLVYHFSGNHWPFGEIPCRLTGFLFYLNMYASIYFLTCISADRFLAIVHPVKSLKLRRPLYAHLACAFLWIVVAVAMAPLLVSPQTVQTNHTVVCLQLYREKASHHALASLAVAFTFPFITTVTCYLLIIRSLRQGPRIEKHLKNKAVRMIAMVLAIFLICFVPYHIHRSVYVLHYRGGGTSCAAQRALALGNRITSCLTSLNGALDPVMYFFVAEKFRHALCNLLCSKRLTGPPPSFEGKTNESSLSARSEL.

Topologically, residues 1–36 (MNGLEAALPSLTDNSSLAYSEQCGQETPLENMLFAC) are extracellular. An N-linked (GlcNAc...) asparagine glycan is attached at N14. A helical membrane pass occupies residues 37–57 (FYLLDFILAFVGNALALWLFI). The Cytoplasmic portion of the chain corresponds to 58–64 (WDHKSGT). A helical transmembrane segment spans residues 65–85 (PANVFLMHLAVADLSCVLVLP). Residues 86–105 (TRLVYHFSGNHWPFGEIPCR) are Extracellular-facing. A disulfide bridge connects residues C104 and C181. Residues 106-126 (LTGFLFYLNMYASIYFLTCIS) traverse the membrane as a helical segment. Residues 127–147 (ADRFLAIVHPVKSLKLRRPLY) lie on the Cytoplasmic side of the membrane. A helical transmembrane segment spans residues 148 to 168 (AHLACAFLWIVVAVAMAPLLV). Over 169–195 (SPQTVQTNHTVVCLQLYREKASHHALA) the chain is Extracellular. N176 carries N-linked (GlcNAc...) asparagine glycosylation. A helical transmembrane segment spans residues 196 to 216 (SLAVAFTFPFITTVTCYLLII). At 217–232 (RSLRQGPRIEKHLKNK) the chain is on the cytoplasmic side. A helical transmembrane segment spans residues 233-253 (AVRMIAMVLAIFLICFVPYHI). The Extracellular portion of the chain corresponds to 254–280 (HRSVYVLHYRGGGTSCAAQRALALGNR). Residues 281–301 (ITSCLTSLNGALDPVMYFFVA) form a helical membrane-spanning segment. Topologically, residues 302 to 339 (EKFRHALCNLLCSKRLTGPPPSFEGKTNESSLSARSEL) are cytoplasmic.

This sequence belongs to the G-protein coupled receptor 1 family.

It is found in the cell membrane. Dual specificity receptor for uracil nucleotides and cysteinyl leukotrienes (CysLTs). Signals through G(i) and inhibition of adenylyl cyclase. May mediate brain damage by nucleotides and CysLTs following ischemia. The sequence is that of Uracil nucleotide/cysteinyl leukotriene receptor from Mus musculus (Mouse).